The primary structure comprises 354 residues: Histidinol-phosphate aminotransferase (354 aa).

Lys210 bears the N6-(pyridoxal phosphate)lysine mark.

The protein belongs to the class-II pyridoxal-phosphate-dependent aminotransferase family. Histidinol-phosphate aminotransferase subfamily. As to quaternary structure, homodimer. The cofactor is pyridoxal 5'-phosphate.

The enzyme catalyses L-histidinol phosphate + 2-oxoglutarate = 3-(imidazol-4-yl)-2-oxopropyl phosphate + L-glutamate. The protein operates within amino-acid biosynthesis; L-histidine biosynthesis; L-histidine from 5-phospho-alpha-D-ribose 1-diphosphate: step 7/9. The sequence is that of Histidinol-phosphate aminotransferase from Clostridium botulinum (strain Langeland / NCTC 10281 / Type F).